The primary structure comprises 448 residues: Probable glycine dehydrogenase (decarboxylating) subunit 1 (448 aa).

It belongs to the GcvP family. N-terminal subunit subfamily. As to quaternary structure, the glycine cleavage system is composed of four proteins: P, T, L and H. In this organism, the P 'protein' is a heterodimer of two subunits.

It catalyses the reaction N(6)-[(R)-lipoyl]-L-lysyl-[glycine-cleavage complex H protein] + glycine + H(+) = N(6)-[(R)-S(8)-aminomethyldihydrolipoyl]-L-lysyl-[glycine-cleavage complex H protein] + CO2. Functionally, the glycine cleavage system catalyzes the degradation of glycine. The P protein binds the alpha-amino group of glycine through its pyridoxal phosphate cofactor; CO(2) is released and the remaining methylamine moiety is then transferred to the lipoamide cofactor of the H protein. This chain is Probable glycine dehydrogenase (decarboxylating) subunit 1, found in Staphylococcus aureus (strain COL).